The chain runs to 243 residues: tRNA pseudouridine synthase A (243 aa).

Aspartate 51 functions as the Nucleophile in the catalytic mechanism. Tyrosine 111 is a substrate binding site.

The protein belongs to the tRNA pseudouridine synthase TruA family. Homodimer.

The catalysed reaction is uridine(38/39/40) in tRNA = pseudouridine(38/39/40) in tRNA. In terms of biological role, formation of pseudouridine at positions 38, 39 and 40 in the anticodon stem and loop of transfer RNAs. In Neorickettsia sennetsu (strain ATCC VR-367 / Miyayama) (Ehrlichia sennetsu), this protein is tRNA pseudouridine synthase A.